Consider the following 1246-residue polypeptide: Stromal processing peptidase, chloroplastic (1246 aa).

A chloroplast-targeting transit peptide spans 1–136 (MASFPSPPLA…AKIRRRHVLH (136 aa)). Histidine 228 is a Zn(2+) binding site. Catalysis depends on glutamate 231, which acts as the Proton acceptor. Histidine 232 contributes to the Zn(2+) binding site. Glutamate 302 is a catalytic residue. Glutamate 309 serves as a coordination point for Zn(2+).

Belongs to the peptidase M16 family. Zn(2+) serves as cofactor.

The protein resides in the plastid. It localises to the chloroplast stroma. In terms of biological role, cleaves presequences (transit peptides) from chloroplastic protein precursors. Initially recognizes a precursor by binding to the C-terminus of its transit peptide and then removes the transit peptide in a single endoproteolytic step. In a next step, pursues the cleavage of transit peptide to a subfragment form. The polypeptide is Stromal processing peptidase, chloroplastic (Oryza sativa subsp. japonica (Rice)).